The chain runs to 857 residues: DNA mismatch repair protein MutS (857 aa).

ATP is bound at residue 613–620 (GPNMGGKS). The interval 797–820 (TSLPHEQPAAHKAKDAPQVPHQSD) is disordered.

This sequence belongs to the DNA mismatch repair MutS family.

Its function is as follows. This protein is involved in the repair of mismatches in DNA. It is possible that it carries out the mismatch recognition step. This protein has a weak ATPase activity. The protein is DNA mismatch repair protein MutS of Pseudomonas putida (strain ATCC 700007 / DSM 6899 / JCM 31910 / BCRC 17059 / LMG 24140 / F1).